The primary structure comprises 41 residues: Antimicrobial protein PN-AMP1 (41 aa).

Gln1 carries the pyrrolidone carboxylic acid modification. In terms of domain architecture, Chitin-binding type-1 spans 1-41 (QQCGRQASGRLCGNRLCCSQWGYCGSTASYCGAGCQSQCRS). 4 disulfides stabilise this stretch: Cys3–Cys18, Cys12–Cys24, Cys17–Cys31, and Cys35–Cys39.

In terms of biological role, chitin-binding protein with a defensive function against numerous chitin containing fungal pathogens. It is also an inhibitor of Gram-positive bacteria such as B.subtilis. In Ipomoea nil (Japanese morning glory), this protein is Antimicrobial protein PN-AMP1.